A 248-amino-acid chain; its full sequence is UPF0736 protein BC_1176 (248 aa).

The protein belongs to the UPF0736 family.

This is UPF0736 protein BC_1176 from Bacillus cereus (strain ATCC 14579 / DSM 31 / CCUG 7414 / JCM 2152 / NBRC 15305 / NCIMB 9373 / NCTC 2599 / NRRL B-3711).